A 105-amino-acid chain; its full sequence is Large ribosomal subunit protein uL24 (105 aa).

The segment at 1 to 25 (MHIKKGDNVKVIAGKDKGKEGKVVS) is disordered.

The protein belongs to the universal ribosomal protein uL24 family. Part of the 50S ribosomal subunit.

Its function is as follows. One of two assembly initiator proteins, it binds directly to the 5'-end of the 23S rRNA, where it nucleates assembly of the 50S subunit. In terms of biological role, one of the proteins that surrounds the polypeptide exit tunnel on the outside of the subunit. In Staphylococcus saprophyticus subsp. saprophyticus (strain ATCC 15305 / DSM 20229 / NCIMB 8711 / NCTC 7292 / S-41), this protein is Large ribosomal subunit protein uL24.